A 1011-amino-acid polypeptide reads, in one-letter code: MDPPSPSRTSQTQPTATSPLTSYRWHTGGGGEKAAGGFRWGRFAGWGRALSHQEPMVSTQPAPRSIFRRVLSAPPKESRTSRLRLSKALWGRHKNPPPEPDPEPEQEAPELEPEPELEPPTPQIPEAPTPNVPVWDIGGFTLLDGKLVLLGGEEEGPRRPRVGSASSEGSIHVAMGNFRDPDRMPGKTEPETAGPNQVHNVRGLLKRLKEKKKARLEPRDGPPSALGSRESLATLSELDLGAERDVRIWPLHPSLLGEPHCFQVTWTGGSRCFSCRSAAERDRWIEDLRRQFQPTQDNVEREETWLSVWVHEAKGLPRAAAGAPGVRAELWLDGALLARTAPRAGPGQLFWAERFHFEALPPARRLSLRLRGLGPGSAVLGRVALALEELDAPRAPAAGLERWFPLLGAPAGAALRARIRARRLRVLPSERYKELAEFLTFHYARLCGALEPALPAQAKEELAAAMVRVLRATGRAQALVTDLGTAELARCGGREALLFRENTLATKAIDEYMKLVAQDYLQETLGQVVRRLCASTEDCEVDPSKCPASELPEHQARLRNSCEEVFETIIHSYDWFPAELGIVFSSWREACKERGSEVLGPRLVCASLFLRLLCPAILAPSLFGLAPDHPAPGPARTLTLIAKVIQNLANRAPFGEKEAYMGFMNSFLEEHGPAMQCFLDQVAMVDVDAAPSGYQGSGDLALQLAVLHAQLCTIFAELDQTTRDTLEPLPTILRAIEEGQPVLVSVPMRLPLPPAQVHSSLSAGEKPGFLAPRDLPKHTPLISKSQSLRSVRRSESWARPRPDEERPLRRPRPVQRTQSVPVRRPARRRQSAGPWPRPKGSLSMGPAPRARPWTRDSASLPRKPSVPWQRQMDQPQDRNQALGTHRPVNKLAELQCEVAALREEQKVLSRLVESLSTQIRALTEQQEQLRGQLQDLDSRLRAGSSEFDSEHNLTSNEGHSLKNLEHRLNEMERTQAQLRDAVQSLQLSPRTRGSWSQPQPLKAPCLNGDTT.

The tract at residues M1–F38 is disordered. Residues S7–S22 are compositionally biased toward low complexity. Residues S18 and S51 each carry the phosphoserine modification. Disordered regions lie at residues H52–D136, G151–Q197, and K209–E230. The span at S81–N95 shows a compositional bias: basic residues. Acidic residues predominate over residues P100–L117. A compositionally biased stretch (pro residues) spans E118–N131. 4 positions are modified to phosphoserine: S164, S166, S167, and S170. The segment covering R179 to P190 has biased composition (basic and acidic residues). One can recognise a PH domain in the interval Q197–Q293. A phosphoserine mark is found at S224, S228, and S231. T234 carries the phosphothreonine modification. The C2 domain occupies W284–F404. A Ras-GAP domain is found at G474–V682. 2 disordered regions span residues Q756 to H885 and L987 to T1011. 2 positions are modified to phosphoserine: S787 and S790. Over residues R792–L808 the composition is skewed to basic and acidic residues. Polar residues-rich tracts occupy residues Q871–L882 and L987–Q999. Residues V888–S988 adopt a coiled-coil conformation. S988 bears the Phosphoserine mark.

Predominantly expressed in cells of hematopoietic lineages.

The protein localises to the cytoplasm. The protein resides in the cell cortex. Its function is as follows. Functions as a Ras GTPase-activating protein. Plays an important role in the expansion and functions of natural killer T (NKT) cells in the liver by negatively regulating RAS activity and the down-stream ERK signaling pathway. The protein is RAS protein activator like-3 (RASAL3) of Homo sapiens (Human).